Reading from the N-terminus, the 285-residue chain is HTH-type transcriptional regulator MurR (285 aa).

One can recognise an HTH rpiR-type domain in the interval 1-77 (MLYLTKISNA…MALIGEYSAS (77 aa)). Residues 37–56 (SRQMAKQLGISQSSIVKFAQ) constitute a DNA-binding region (H-T-H motif). One can recognise an SIS domain in the interval 128-268 (IIEVISKAPF…FVGLVQLNDV (141 aa)).

Homotetramer.

The protein operates within amino-sugar metabolism; N-acetylmuramate degradation [regulation]. Represses the expression of the murPQ operon involved in the uptake and degradation of N-acetylmuramic acid (MurNAc). Binds to two adjacent inverted repeats within the operator region. MurNAc 6-phosphate, the substrate of MurQ, is the specific inducer that weakens binding of MurR to the operator. In Escherichia coli (strain K12 / MC4100 / BW2952), this protein is HTH-type transcriptional regulator MurR.